The primary structure comprises 455 residues: Bifunctional protein GlmU (455 aa).

The interval 1 to 227 is pyrophosphorylase; the sequence is MGLSVIILAA…CEEVQGVNDR (227 aa). UDP-N-acetyl-alpha-D-glucosamine contacts are provided by residues 8–11, Lys-22, Gln-73, 78–79, 100–102, Gly-137, Glu-152, Asn-167, and Asn-225; these read LAAG, GT, and YGD. Mg(2+) is bound at residue Asp-102. Asn-225 lines the Mg(2+) pocket. Positions 228-248 are linker; the sequence is WELTKLERYYQRLMAKKLSLA. The N-acetyltransferase stretch occupies residues 249–455; that stretch reads GVTIIDPERF…KGWHRPTKKE (207 aa). UDP-N-acetyl-alpha-D-glucosamine is bound by residues Arg-332 and Lys-350. His-362 functions as the Proton acceptor in the catalytic mechanism. Tyr-365 and Asn-376 together coordinate UDP-N-acetyl-alpha-D-glucosamine. Residues Ala-379, 385–386, Ser-404, Ala-422, and Arg-439 each bind acetyl-CoA; that span reads NY.

This sequence in the N-terminal section; belongs to the N-acetylglucosamine-1-phosphate uridyltransferase family. In the C-terminal section; belongs to the transferase hexapeptide repeat family. As to quaternary structure, homotrimer. Mg(2+) is required as a cofactor.

The protein resides in the cytoplasm. It catalyses the reaction alpha-D-glucosamine 1-phosphate + acetyl-CoA = N-acetyl-alpha-D-glucosamine 1-phosphate + CoA + H(+). The catalysed reaction is N-acetyl-alpha-D-glucosamine 1-phosphate + UTP + H(+) = UDP-N-acetyl-alpha-D-glucosamine + diphosphate. Its pathway is nucleotide-sugar biosynthesis; UDP-N-acetyl-alpha-D-glucosamine biosynthesis; N-acetyl-alpha-D-glucosamine 1-phosphate from alpha-D-glucosamine 6-phosphate (route II): step 2/2. The protein operates within nucleotide-sugar biosynthesis; UDP-N-acetyl-alpha-D-glucosamine biosynthesis; UDP-N-acetyl-alpha-D-glucosamine from N-acetyl-alpha-D-glucosamine 1-phosphate: step 1/1. It participates in bacterial outer membrane biogenesis; LPS lipid A biosynthesis. Catalyzes the last two sequential reactions in the de novo biosynthetic pathway for UDP-N-acetylglucosamine (UDP-GlcNAc). The C-terminal domain catalyzes the transfer of acetyl group from acetyl coenzyme A to glucosamine-1-phosphate (GlcN-1-P) to produce N-acetylglucosamine-1-phosphate (GlcNAc-1-P), which is converted into UDP-GlcNAc by the transfer of uridine 5-monophosphate (from uridine 5-triphosphate), a reaction catalyzed by the N-terminal domain. This Coxiella burnetii (strain CbuG_Q212) (Coxiella burnetii (strain Q212)) protein is Bifunctional protein GlmU.